A 304-amino-acid chain; its full sequence is Release factor glutamine methyltransferase (304 aa).

2 residues coordinate S-adenosyl-L-methionine: aspartate 144 and asparagine 188. 188-191 serves as a coordination point for substrate; sequence NPPY.

This sequence belongs to the protein N5-glutamine methyltransferase family. PrmC subfamily.

It carries out the reaction L-glutaminyl-[peptide chain release factor] + S-adenosyl-L-methionine = N(5)-methyl-L-glutaminyl-[peptide chain release factor] + S-adenosyl-L-homocysteine + H(+). Methylates the class 1 translation termination release factors RF1/PrfA and RF2/PrfB on the glutamine residue of the universally conserved GGQ motif. The chain is Release factor glutamine methyltransferase from Mycobacterium tuberculosis (strain CDC 1551 / Oshkosh).